We begin with the raw amino-acid sequence, 302 residues long: Haloalkane dehalogenase (302 aa).

The AB hydrolase-1 domain maps to 48 to 150 (PVLLMHGEPS…AGLVIANTGL (103 aa)). Residue Asp123 is the Nucleophile of the active site. Asp249 functions as the Proton donor in the catalytic mechanism. His278 acts as the Proton acceptor in catalysis.

This sequence belongs to the haloalkane dehalogenase family. Type 1 subfamily. Monomer.

It carries out the reaction 1-haloalkane + H2O = a halide anion + a primary alcohol + H(+). Functionally, catalyzes hydrolytic cleavage of carbon-halogen bonds in halogenated aliphatic compounds, leading to the formation of the corresponding primary alcohols, halide ions and protons. The protein is Haloalkane dehalogenase of Caulobacter sp. (strain K31).